We begin with the raw amino-acid sequence, 204 residues long: Putative uracil phosphoribosyltransferase urg2 (204 aa).

5-phospho-alpha-D-ribose 1-diphosphate is bound by residues R75, R100, and 126–134; that span reads DPVMATGGT. Residue Y187 coordinates D-ribose 5-phosphate. Uracil is bound by residues L188 and 193–195; that span reads GDI. Residue D194 coordinates 5-phospho-alpha-D-ribose 1-diphosphate.

This sequence belongs to the UPRTase family. The cofactor is Mg(2+).

It is found in the cytoplasm. The protein localises to the nucleus. The catalysed reaction is UMP + diphosphate = 5-phospho-alpha-D-ribose 1-diphosphate + uracil. Its pathway is pyrimidine metabolism; UMP biosynthesis via salvage pathway; UMP from uracil: step 1/1. With respect to regulation, allosterically activated by GTP. In terms of biological role, catalyzes the conversion of uracil and 5-phospho-alpha-D-ribose 1-diphosphate (PRPP) to UMP and diphosphate. This is Putative uracil phosphoribosyltransferase urg2 from Schizosaccharomyces pombe (strain 972 / ATCC 24843) (Fission yeast).